Here is a 166-residue protein sequence, read N- to C-terminus: MAHIEKQAGELQEKLIAVNRVSKTVKGGRIFSFTALTVVGDGNGRVGFGYGKAREVPAAIQKAMEKARRNMMNVALNSGTLQHPIKGVHTGSRVFMQPASEGTGIIAGGAMRAVLEVAGVHNVLAKAYGSTNPINVVRATIDALGNMKSPEMVAAKRGKSVEEILG.

Positions 11–74 constitute an S5 DRBM domain; it reads LQEKLIAVNR…EKARRNMMNV (64 aa).

Belongs to the universal ribosomal protein uS5 family. As to quaternary structure, part of the 30S ribosomal subunit. Contacts proteins S4 and S8.

In terms of biological role, with S4 and S12 plays an important role in translational accuracy. Located at the back of the 30S subunit body where it stabilizes the conformation of the head with respect to the body. The protein is Small ribosomal subunit protein uS5 of Sodalis glossinidius (strain morsitans).